The sequence spans 123 residues: Ribonuclease P protein component (123 aa).

The protein belongs to the RnpA family. In terms of assembly, consists of a catalytic RNA component (M1 or rnpB) and a protein subunit.

The enzyme catalyses Endonucleolytic cleavage of RNA, removing 5'-extranucleotides from tRNA precursor.. Its function is as follows. RNaseP catalyzes the removal of the 5'-leader sequence from pre-tRNA to produce the mature 5'-terminus. It can also cleave other RNA substrates such as 4.5S RNA. The protein component plays an auxiliary but essential role in vivo by binding to the 5'-leader sequence and broadening the substrate specificity of the ribozyme. This is Ribonuclease P protein component from Streptomyces bikiniensis.